We begin with the raw amino-acid sequence, 503 residues long: Probable cytosol aminopeptidase (503 aa).

2 residues coordinate Mn(2+): Lys270 and Asp275. Lys282 is an active-site residue. The Mn(2+) site is built by Asp293, Asp352, and Glu354. Arg356 is an active-site residue.

This sequence belongs to the peptidase M17 family. The cofactor is Mn(2+).

The protein resides in the cytoplasm. It catalyses the reaction Release of an N-terminal amino acid, Xaa-|-Yaa-, in which Xaa is preferably Leu, but may be other amino acids including Pro although not Arg or Lys, and Yaa may be Pro. Amino acid amides and methyl esters are also readily hydrolyzed, but rates on arylamides are exceedingly low.. It carries out the reaction Release of an N-terminal amino acid, preferentially leucine, but not glutamic or aspartic acids.. In terms of biological role, presumably involved in the processing and regular turnover of intracellular proteins. Catalyzes the removal of unsubstituted N-terminal amino acids from various peptides. This is Probable cytosol aminopeptidase from Erwinia tasmaniensis (strain DSM 17950 / CFBP 7177 / CIP 109463 / NCPPB 4357 / Et1/99).